The primary structure comprises 319 residues: tRNA-cytidine(32) 2-sulfurtransferase (319 aa).

The short motif at 43 to 48 is the PP-loop motif element; it reads SGGKDS. [4Fe-4S] cluster-binding residues include C118, C121, and C209. The segment at 272–297 is disordered; that stretch reads DLAFDSEKMPERFSDGSEEDESEIKI. Residues 276–286 are compositionally biased toward basic and acidic residues; sequence DSEKMPERFSD.

Belongs to the TtcA family. In terms of assembly, homodimer. It depends on Mg(2+) as a cofactor. Requires [4Fe-4S] cluster as cofactor.

It localises to the cytoplasm. It catalyses the reaction cytidine(32) in tRNA + S-sulfanyl-L-cysteinyl-[cysteine desulfurase] + AH2 + ATP = 2-thiocytidine(32) in tRNA + L-cysteinyl-[cysteine desulfurase] + A + AMP + diphosphate + H(+). Its pathway is tRNA modification. In terms of biological role, catalyzes the ATP-dependent 2-thiolation of cytidine in position 32 of tRNA, to form 2-thiocytidine (s(2)C32). The sulfur atoms are provided by the cysteine/cysteine desulfurase (IscS) system. The polypeptide is tRNA-cytidine(32) 2-sulfurtransferase (Neisseria gonorrhoeae (strain ATCC 700825 / FA 1090)).